An 83-amino-acid chain; its full sequence is U4-theraphotoxin-Hhn1x (83 aa).

The N-terminal stretch at 1 to 20 (MTLIAILTCAAALVLHTTAA) is a signal peptide. The propeptide occupies 21–46 (EELEAESQLMEVGMPDTELEAVDEER). 3 disulfide bridges follow: Cys-50-Cys-64, Cys-54-Cys-75, and Cys-69-Cys-80.

This sequence belongs to the neurotoxin 12 (Hwtx-2) family. 02 (Hwtx-2) subfamily. In terms of tissue distribution, expressed by the venom gland.

The protein localises to the secreted. Functionally, postsynaptic neurotoxin. The polypeptide is U4-theraphotoxin-Hhn1x (Cyriopagopus hainanus (Chinese bird spider)).